We begin with the raw amino-acid sequence, 208 residues long: Ribosomal RNA small subunit methyltransferase G (208 aa).

S-adenosyl-L-methionine contacts are provided by residues Gly-73, Leu-78, 124-125 (VE), and Arg-139.

It belongs to the methyltransferase superfamily. RNA methyltransferase RsmG family.

It localises to the cytoplasm. The catalysed reaction is guanosine(527) in 16S rRNA + S-adenosyl-L-methionine = N(7)-methylguanosine(527) in 16S rRNA + S-adenosyl-L-homocysteine. Its function is as follows. Specifically methylates the N7 position of guanine in position 527 of 16S rRNA. The chain is Ribosomal RNA small subunit methyltransferase G from Aeromonas salmonicida (strain A449).